An 838-amino-acid chain; its full sequence is Axin-2 (838 aa).

A disordered region spans residues 1–75 (MSSAVLVTLL…EGRASPDSPL (75 aa)). The short motif at 21–30 (APRPPVPGEE) is the Tankyrase-binding motif element. A compositionally biased stretch (polar residues) spans 42 to 55 (KVQSTKPMPVSSNA). The segment covering 56 to 69 (RRNEDGLGEPEGRA) has biased composition (basic and acidic residues). An RGS domain is found at 81–200 (SLHSLLGDQD…LTSDIYLEYV (120 aa)). Disordered regions lie at residues 300 to 333 (SELS…KKQL), 398 to 435 (IRED…EEDP), 450 to 483 (PGCQ…LLPT), 568 to 682 (GSRG…AMPP), and 712 to 744 (VASQ…DHKE). Residues 303–318 (SSDALTDDSMSMTDSS) are compositionally biased toward low complexity. The tract at residues 327-413 (MGSKKQLQRE…KEGSEQALSS (87 aa)) is interaction with GSK3B. An interaction with beta-catenin region spans residues 413-476 (SRDGAPVQHP…PDHHHHHHQQ (64 aa)). A compositionally biased stretch (polar residues) spans 727-737 (AGPTSFSNPSL). Residues 756–838 (ASELIVTYFF…RILGKVERID (83 aa)) enclose the DIX domain.

Interacts with SMAD7 and RNF111. Interacts with ANKRD6. Interacts with glycogen synthase kinase-3 beta (GSK3B) and beta-catenin. The interaction between axin and beta-catenin occurs via the armadillo repeats contained in beta-catenin. Interacts with SIAH1. Interacts with SIAH2. ADP-ribosylated by tankyrase TNKS and TNKS2. Poly-ADP-ribosylated protein is recognized by RNF146, followed by ubiquitination and subsequent activation of the Wnt signaling pathway. Post-translationally, ubiquitinated by RNF146 when poly-ADP-ribosylated, leading to its degradation and subsequent activation of the Wnt signaling pathway. Deubiquitinated by USP34, deubiquitinated downstream of beta-catenin stabilization step: deubiquitination is important Wnt signaling to positively regulate beta-catenin (CTNBB1)-mediated transcription. In terms of processing, probably phosphorylated by GSK3B and dephosphorylated by PP2A. In terms of tissue distribution, expressed in lung and thymus.

Its subcellular location is the cytoplasm. In terms of biological role, inhibitor of the Wnt signaling pathway. Down-regulates beta-catenin. Probably facilitate the phosphorylation of beta-catenin and APC by GSK3B. The sequence is that of Axin-2 (Axin2) from Rattus norvegicus (Rat).